Consider the following 264-residue polypeptide: Glutamate racemase (264 aa).

Substrate is bound by residues 10-11 (DS) and 42-43 (YG). Catalysis depends on C73, which acts as the Proton donor/acceptor. 74–75 (NT) serves as a coordination point for substrate. The Proton donor/acceptor role is filled by C183. 184–185 (TH) lines the substrate pocket.

This sequence belongs to the aspartate/glutamate racemases family.

It carries out the reaction L-glutamate = D-glutamate. Its pathway is cell wall biogenesis; peptidoglycan biosynthesis. Provides the (R)-glutamate required for cell wall biosynthesis. The protein is Glutamate racemase of Streptococcus pyogenes serotype M2 (strain MGAS10270).